A 223-amino-acid polypeptide reads, in one-letter code: Pyridoxine/pyridoxamine 5'-phosphate oxidase (223 aa).

Substrate-binding positions include 8-11 (RVDY) and lysine 65. Residues 60 to 65 (RTVLLK), 75 to 76 (YT), arginine 81, lysine 82, and glutamine 104 each bind FMN. Residues tyrosine 122, arginine 126, and serine 130 each coordinate substrate. Residues 139–140 (QS) and tryptophan 188 each bind FMN. Residue 194–196 (RLH) coordinates substrate. Arginine 198 is an FMN binding site.

It belongs to the pyridoxamine 5'-phosphate oxidase family. As to quaternary structure, homodimer. Requires FMN as cofactor.

It catalyses the reaction pyridoxamine 5'-phosphate + O2 + H2O = pyridoxal 5'-phosphate + H2O2 + NH4(+). The catalysed reaction is pyridoxine 5'-phosphate + O2 = pyridoxal 5'-phosphate + H2O2. Its pathway is cofactor metabolism; pyridoxal 5'-phosphate salvage; pyridoxal 5'-phosphate from pyridoxamine 5'-phosphate: step 1/1. The protein operates within cofactor metabolism; pyridoxal 5'-phosphate salvage; pyridoxal 5'-phosphate from pyridoxine 5'-phosphate: step 1/1. Functionally, catalyzes the oxidation of either pyridoxine 5'-phosphate (PNP) or pyridoxamine 5'-phosphate (PMP) into pyridoxal 5'-phosphate (PLP). In Kineococcus radiotolerans (strain ATCC BAA-149 / DSM 14245 / SRS30216), this protein is Pyridoxine/pyridoxamine 5'-phosphate oxidase.